A 378-amino-acid chain; its full sequence is Queuine tRNA-ribosyltransferase (378 aa).

D91 functions as the Proton acceptor in the catalytic mechanism. Substrate-binding positions include 91 to 95, D145, Q197, and G224; that span reads DSGGF. The active-site Nucleophile is D274. Residues 279–283 are RNA binding; important for wobble base 34 recognition; it reads TRLAR. Residues C312, C314, C317, and H343 each contribute to the Zn(2+) site.

It belongs to the queuine tRNA-ribosyltransferase family. Homodimer. Within each dimer, one monomer is responsible for RNA recognition and catalysis, while the other monomer binds to the replacement base PreQ1. The cofactor is Zn(2+).

The enzyme catalyses 7-aminomethyl-7-carbaguanine + guanosine(34) in tRNA = 7-aminomethyl-7-carbaguanosine(34) in tRNA + guanine. It participates in tRNA modification; tRNA-queuosine biosynthesis. Its function is as follows. Catalyzes the base-exchange of a guanine (G) residue with the queuine precursor 7-aminomethyl-7-deazaguanine (PreQ1) at position 34 (anticodon wobble position) in tRNAs with GU(N) anticodons (tRNA-Asp, -Asn, -His and -Tyr). Catalysis occurs through a double-displacement mechanism. The nucleophile active site attacks the C1' of nucleotide 34 to detach the guanine base from the RNA, forming a covalent enzyme-RNA intermediate. The proton acceptor active site deprotonates the incoming PreQ1, allowing a nucleophilic attack on the C1' of the ribose to form the product. After dissociation, two additional enzymatic reactions on the tRNA convert PreQ1 to queuine (Q), resulting in the hypermodified nucleoside queuosine (7-(((4,5-cis-dihydroxy-2-cyclopenten-1-yl)amino)methyl)-7-deazaguanosine). This chain is Queuine tRNA-ribosyltransferase, found in Methylacidiphilum infernorum (isolate V4) (Methylokorus infernorum (strain V4)).